The chain runs to 214 residues: Thymidylate kinase (214 aa).

14–21 contacts ATP; that stretch reads GLEGAGKT.

It belongs to the thymidylate kinase family.

The catalysed reaction is dTMP + ATP = dTDP + ADP. Functionally, phosphorylation of dTMP to form dTDP in both de novo and salvage pathways of dTTP synthesis. This Mannheimia succiniciproducens (strain KCTC 0769BP / MBEL55E) protein is Thymidylate kinase.